A 380-amino-acid polypeptide reads, in one-letter code: Protein FAM110B (380 aa).

Positions 92 to 272 (ALGSPTLKGF…RPSLQRSKSD (181 aa)) are disordered. Positions 100–110 (GFGGGGGGAKS) are enriched in gly residues. Positions 127–138 (ILNSSEGSSTGS) are enriched in polar residues. A compositionally biased stretch (basic and acidic residues) spans 153 to 162 (DAAELHRHSF). A compositionally biased stretch (low complexity) spans 239-248 (KVAAPAAVKS). Phosphoserine is present on residues S248 and S311. Residues 327–347 (DCEQSQDSNSDLRNDDSANDR) are disordered. Over residues 336–345 (SDLRNDDSAN) the composition is skewed to basic and acidic residues.

Belongs to the FAM110 family.

It is found in the cytoplasm. It localises to the cytoskeleton. Its subcellular location is the microtubule organizing center. The protein resides in the centrosome. This is Protein FAM110B (FAM110B) from Bos taurus (Bovine).